The chain runs to 406 residues: Argininosuccinate synthase (406 aa).

Residues 11–19 and alanine 38 contribute to the ATP site; that span reads AYSGGLDTS. The L-citrulline site is built by tyrosine 91 and serine 96. Glycine 121 provides a ligand contact to ATP. The L-aspartate site is built by threonine 123, asparagine 127, and aspartate 128. Asparagine 127 contributes to the L-citrulline binding site. L-citrulline-binding residues include arginine 131, serine 181, serine 190, glutamate 266, and tyrosine 278.

It belongs to the argininosuccinate synthase family. Type 1 subfamily. As to quaternary structure, homotetramer.

The protein resides in the cytoplasm. It carries out the reaction L-citrulline + L-aspartate + ATP = 2-(N(omega)-L-arginino)succinate + AMP + diphosphate + H(+). Its pathway is amino-acid biosynthesis; L-arginine biosynthesis; L-arginine from L-ornithine and carbamoyl phosphate: step 2/3. This chain is Argininosuccinate synthase, found in Campylobacter curvus (strain 525.92).